The primary structure comprises 459 residues: 5-hydroxytryptamine receptor 2C (459 aa).

A signal peptide spans M1–A32. The Extracellular segment spans residues I33 to W56. Residues P57 to M81 form a helical membrane-spanning segment. Residues E82–N87 are Cytoplasmic-facing. Residues A88–L112 form a helical membrane-spanning segment. Topologically, residues L113–P129 are extracellular. C128 and C208 are oxidised to a cystine. Residues V130–D152 form a helical membrane-spanning segment. T140 is a binding site for ergotamine. The short motif at D152–Y154 is the DRY motif; important for ligand-induced conformation changes element. Over R153 to S168 the chain is Cytoplasmic. The helical transmembrane segment at R169–I190 threads the bilayer. At P191–N214 the chain is on the extracellular side. Residues N204 and N205 are each glycosylated (N-linked (GlcNAc...) asparagine). Position 210 (L210) interacts with ergotamine. Residues F215–L237 form a helical membrane-spanning segment. At T238–K312 the chain is on the cytoplasmic side. A disordered region spans residues D274–Q302. A compositionally biased stretch (basic residues) spans P288–R298. The helical transmembrane segment at V313 to L337 threads the bilayer. Cysteines 338 and 342 form a disulfide. The Extracellular portion of the chain corresponds to C338–E348. The chain crosses the membrane as a helical span at residues K349 to L371. Positions N365–Y369 match the NPxxY motif; important for ligand-induced conformation changes and signaling motif. Topologically, residues F372–V459 are cytoplasmic. Residues S457–V459 carry the PDZ-binding motif.

Belongs to the G-protein coupled receptor 1 family. Interacts with MPDZ. Interacts with ARRB2. Interacts with MPP3; this interaction stabilizes the receptor at the plasma membrane and prevents the desensitization of the HTR2C receptor-mediated calcium response. As to expression, detected in brain cortex, hypothalamus, brainstem and arcuate nucleus. Detected in the paraventricular nucleus of the hypothalamus.

The protein localises to the cell membrane. Its function is as follows. G-protein coupled receptor for 5-hydroxytryptamine (serotonin). Also functions as a receptor for various drugs and psychoactive substances, including ergot alkaloid derivatives, 1-2,5,-dimethoxy-4-iodophenyl-2-aminopropane (DOI) and lysergic acid diethylamide (LSD). Ligand binding causes a conformation change that triggers signaling via guanine nucleotide-binding proteins (G proteins) and modulates the activity of downstream effectors. HTR2C is coupled to G(q)/G(11) G alpha proteins and activates phospholipase C-beta, releasing diacylglycerol (DAG) and inositol 1,4,5-trisphosphate (IP3) second messengers that modulate the activity of phosphatidylinositol 3-kinase and promote the release of Ca(2+) ions from intracellular stores, respectively. Beta-arrestin family members inhibit signaling via G proteins and mediate activation of alternative signaling pathways. Regulates neuronal activity via the activation of short transient receptor potential calcium channels in the brain, and thereby modulates the activation of pro-opiomelanocortin neurons and the release of CRH that then regulates the release of corticosterone. Plays a role in the regulation of appetite and eating behavior, responses to anxiogenic stimuli and stress. Plays a role in insulin sensitivity and glucose homeostasis. This chain is 5-hydroxytryptamine receptor 2C, found in Mus musculus (Mouse).